Here is a 1276-residue protein sequence, read N- to C-terminus: Probable histone acetyltransferase HAC-like 3 (1276 aa).

The segment at 391–421 (VDRAEQTSNSTVSKPTSPASDGSSGKHYPAK) is disordered. Residues 396 to 413 (QTSNSTVSKPTSPASDGS) show a composition bias toward polar residues. The PHD-type zinc finger occupies 621 to 689 (SSICGRCHHL…EYTCAKCFLK (69 aa)). Positions 704–1130 (ILGARELPRT…ILYHLHDSTC (427 aa)) constitute a CBP/p300-type HAT domain. Acetyl-CoA contacts are provided by residues 827-829 (IDS), 846-847 (RT), and Trp902. The stretch at 953–973 (EAERLLEKKDDDTSQKKETQL) forms a coiled coil. ZZ-type zinc fingers lie at residues 1013–1076 (CLQQ…EEPL) and 1125–1187 (LHDS…LQDY). 16 residues coordinate Zn(2+): Cys1018, Cys1021, Cys1033, Cys1036, Cys1042, Cys1045, His1058, His1066, Cys1130, Cys1133, Cys1145, Cys1148, Cys1154, Cys1157, His1168, and His1177. A TAZ-type zinc finger spans residues 1177-1260 (HVLQKYTLQD…DCSAPRCRDI (84 aa)).

The protein resides in the nucleus. The enzyme catalyses L-lysyl-[protein] + acetyl-CoA = N(6)-acetyl-L-lysyl-[protein] + CoA + H(+). Acetyltransferase enzyme. Acetylates histones, giving a specific tag for transcriptional activation. The protein is Probable histone acetyltransferase HAC-like 3 of Oryza sativa subsp. japonica (Rice).